Here is a 344-residue protein sequence, read N- to C-terminus: uncharacterized protein (344 aa).

This sequence belongs to the MG414/MG415 family.

This is an uncharacterized protein from Mycoplasma pneumoniae (strain ATCC 29342 / M129 / Subtype 1) (Mycoplasmoides pneumoniae).